Reading from the N-terminus, the 232-residue chain is CLPDPAALSRRCTHPGGERRGGSGRGGAASGRRRVRFVSAVPGPEEPGSPRGGRRRRAEASCAKPRRARTAFTYEQLVALENKFRATRYLSVCERLNLALSLSLTETQVKIWFQNRRTKWKKQHPGADGAAAPAPPAAARCSPSPPRPAALPGQTFPSYAATSALFPAASPFPPGRPRRRTLRSLLGARVPRASTPRTSENPPRLCPSAPGVRNRVFLLRLASTKRKNTYML.

Disordered stretches follow at residues 1–64 (CLPD…SCAK), 122–150 (KQHPGADGAAAPAPPAAARCSPSPPRPAA), and 185–208 (LLGARVPRASTPRTSENPPRLCPS). The segment at residues 65-124 (PRRARTAFTYEQLVALENKFRATRYLSVCERLNLALSLSLTETQVKIWFQNRRTKWKKQH) is a DNA-binding region (homeobox). Residues 126–142 (GADGAAAPAPPAAARCS) show a composition bias toward low complexity.

It belongs to the NK-1 homeobox family. As to expression, transiently expressed in the birth zone of the whole spinal cord regardless of the axial level.

Its subcellular location is the nucleus. The protein is Homeobox protein SAX-1 (SAX1) of Gallus gallus (Chicken).